We begin with the raw amino-acid sequence, 408 residues long: Peptidase T (408 aa).

His78 lines the Zn(2+) pocket. Asp80 is a catalytic residue. Residue Asp140 coordinates Zn(2+). Residue Glu173 is the Proton acceptor of the active site. Residues Glu174, Asp196, and His379 each coordinate Zn(2+).

It belongs to the peptidase M20B family. The cofactor is Zn(2+).

The protein localises to the cytoplasm. It carries out the reaction Release of the N-terminal residue from a tripeptide.. Its function is as follows. Cleaves the N-terminal amino acid of tripeptides. The chain is Peptidase T from Escherichia coli O6:K15:H31 (strain 536 / UPEC).